A 222-amino-acid polypeptide reads, in one-letter code: Orotidine 5'-phosphate decarboxylase (222 aa).

Residues aspartate 11, lysine 30, 59 to 68 (DFKLADIGYI), serine 115, 164 to 174 (PGMGSQGGSYG), glycine 187, and arginine 188 contribute to the substrate site. Lysine 61 acts as the Proton donor in catalysis.

It belongs to the OMP decarboxylase family. Type 1 subfamily. Homodimer.

The catalysed reaction is orotidine 5'-phosphate + H(+) = UMP + CO2. The protein operates within pyrimidine metabolism; UMP biosynthesis via de novo pathway; UMP from orotate: step 2/2. Functionally, catalyzes the decarboxylation of orotidine 5'-monophosphate (OMP) to uridine 5'-monophosphate (UMP). This chain is Orotidine 5'-phosphate decarboxylase, found in Saccharolobus solfataricus (strain ATCC 35092 / DSM 1617 / JCM 11322 / P2) (Sulfolobus solfataricus).